A 371-amino-acid polypeptide reads, in one-letter code: Cysteine endopeptidase Rep1 (371 aa).

An N-terminal signal peptide occupies residues 1 to 28 (MGRVISSWRVLAVVAALMAMAAVELCAA). Residues 29-133 (IPFDERDLES…LPGFMYEGVR (105 aa)) constitute a propeptide, activation peptide. Intrachain disulfides connect cysteine 156/cysteine 198, cysteine 190/cysteine 231, and cysteine 290/cysteine 342. Cysteine 159 is a catalytic residue. Asparagine 228 carries an N-linked (GlcNAc...) asparagine glycan. Residues histidine 296 and asparagine 317 contribute to the active site.

This sequence belongs to the peptidase C1 family. As to expression, expressed in germinating seeds.

The protein resides in the protein storage vacuole. Its function is as follows. Cysteine endopeptidase that digests in vitro both the acidic and basic subunits of glutelin, the major seed storage protein of rice. Acts as a negative regulator of cell death. The protein is Cysteine endopeptidase Rep1 of Oryza sativa subsp. japonica (Rice).